The primary structure comprises 484 residues: Glycogen synthase (484 aa).

Residue Lys15 coordinates ADP-alpha-D-glucose.

It belongs to the glycosyltransferase 1 family. Bacterial/plant glycogen synthase subfamily.

The catalysed reaction is [(1-&gt;4)-alpha-D-glucosyl](n) + ADP-alpha-D-glucose = [(1-&gt;4)-alpha-D-glucosyl](n+1) + ADP + H(+). It functions in the pathway glycan biosynthesis; glycogen biosynthesis. Its function is as follows. Synthesizes alpha-1,4-glucan chains using ADP-glucose. The polypeptide is Glycogen synthase (Anoxybacillus flavithermus (strain DSM 21510 / WK1)).